We begin with the raw amino-acid sequence, 907 residues long: DNA ligase 4 (907 aa).

The ATP site is built by Glu273, Lys275, Arg280, Glu333, Phe378, Glu438, Lys443, Lys460, and Lys462. Lys275 functions as the N6-AMP-lysine intermediate in the catalytic mechanism. Glu333 lines the Mg(2+) pocket. Glu438 serves as a coordination point for Mg(2+). BRCT domains are found at residues Pro655–Ile754 and Val800–Cys906.

It belongs to the ATP-dependent DNA ligase family. Mg(2+) is required as a cofactor.

Its subcellular location is the nucleus. The enzyme catalyses ATP + (deoxyribonucleotide)n-3'-hydroxyl + 5'-phospho-(deoxyribonucleotide)m = (deoxyribonucleotide)n+m + AMP + diphosphate.. Its function is as follows. DNA ligase involved in DNA non-homologous end joining (NHEJ); required for double-strand break (DSB) repair. The protein is DNA ligase 4 (LIG4) of Kluyveromyces lactis (strain ATCC 8585 / CBS 2359 / DSM 70799 / NBRC 1267 / NRRL Y-1140 / WM37) (Yeast).